We begin with the raw amino-acid sequence, 325 residues long: MSSVETAGKRPAKVEAGVKLRGAEKVARIPVKIIPTDELPKKPDWIRVRIPVSPEVDQIKQTLRKHKLHSVCEEASCPNLGECFSSGTATFMIMGDICTRRCPFCDVGHGRPNALDPDEPKNLAQAIADMRLKYVVITSVDRDDLRDGGAQHFADCLREIRKLSPSIQLETLVPDYRGRMEIALDITATEPPDVFNHNLETVPRLYKSSRPGSDFEWSLDLLEKFKQRVPGVPTKSGLMLGLGETDEEVIEVMQRMREHDIDMLTLGQYLQPSRNHLPVQRFVHPDTFAWFAEEGMKMGFKNVASGPLVRSSYHADQQAHGAKHD.

Positions 72, 77, 83, 98, 102, 105, and 312 each coordinate [4Fe-4S] cluster. Residues 84–301 (FSSGTATFMI…AEEGMKMGFK (218 aa)) form the Radical SAM core domain.

It belongs to the radical SAM superfamily. Lipoyl synthase family. [4Fe-4S] cluster is required as a cofactor.

The protein localises to the cytoplasm. It catalyses the reaction [[Fe-S] cluster scaffold protein carrying a second [4Fe-4S](2+) cluster] + N(6)-octanoyl-L-lysyl-[protein] + 2 oxidized [2Fe-2S]-[ferredoxin] + 2 S-adenosyl-L-methionine + 4 H(+) = [[Fe-S] cluster scaffold protein] + N(6)-[(R)-dihydrolipoyl]-L-lysyl-[protein] + 4 Fe(3+) + 2 hydrogen sulfide + 2 5'-deoxyadenosine + 2 L-methionine + 2 reduced [2Fe-2S]-[ferredoxin]. It participates in protein modification; protein lipoylation via endogenous pathway; protein N(6)-(lipoyl)lysine from octanoyl-[acyl-carrier-protein]: step 2/2. Catalyzes the radical-mediated insertion of two sulfur atoms into the C-6 and C-8 positions of the octanoyl moiety bound to the lipoyl domains of lipoate-dependent enzymes, thereby converting the octanoylated domains into lipoylated derivatives. The chain is Lipoyl synthase from Stutzerimonas stutzeri (strain A1501) (Pseudomonas stutzeri).